Consider the following 397-residue polypeptide: UPF0261 protein mlr3387 (397 aa).

It belongs to the UPF0261 family.

The polypeptide is UPF0261 protein mlr3387 (Mesorhizobium japonicum (strain LMG 29417 / CECT 9101 / MAFF 303099) (Mesorhizobium loti (strain MAFF 303099))).